A 429-amino-acid polypeptide reads, in one-letter code: Glutamate-1-semialdehyde 2,1-aminomutase 2 (429 aa).

N6-(pyridoxal phosphate)lysine is present on K268.

Belongs to the class-III pyridoxal-phosphate-dependent aminotransferase family. HemL subfamily. As to quaternary structure, homodimer. It depends on pyridoxal 5'-phosphate as a cofactor.

The protein resides in the cytoplasm. It carries out the reaction (S)-4-amino-5-oxopentanoate = 5-aminolevulinate. It participates in porphyrin-containing compound metabolism; protoporphyrin-IX biosynthesis; 5-aminolevulinate from L-glutamyl-tRNA(Glu): step 2/2. This is Glutamate-1-semialdehyde 2,1-aminomutase 2 from Bacillus mycoides (strain KBAB4) (Bacillus weihenstephanensis).